The chain runs to 480 residues: Vinorine hydroxylase (480 aa).

A helical transmembrane segment spans residues 3-23; it reads LLQILLAIAGLLAILLLQKQW. Cys418 contributes to the heme binding site.

Belongs to the cytochrome P450 family. It depends on heme as a cofactor. Mainly expressed in roots and, to a lesser extent, in leaves.

It localises to the membrane. It carries out the reaction vinorine + reduced [NADPH--hemoprotein reductase] + O2 = vomilenine + oxidized [NADPH--hemoprotein reductase] + H2O + H(+). It catalyses the reaction vomilenine = perakine. Its pathway is alkaloid biosynthesis; ajmaline biosynthesis. A cytochrome P450 monooxygenase involved in the biosynthesis of ajmaline-type monoterpenoid indole alkaloids (MIAs) natural products, important plant-derived pharmaceuticals used in the therapy of heart disorders. Catalyzes the hydroxylation of vinorine to vomilenine, an intermediate chemical in the biosynthesis of ajmaline. Supports also vomilenine isomerization to perakine. The chain is Vinorine hydroxylase from Rauvolfia serpentina (Serpentine wood).